Reading from the N-terminus, the 352-residue chain is Thrombopoietin (352 aa).

Positions 1-23 (MELTELLLVVMLLLTARLDPCLP) are cleaved as a signal peptide. 2 disulfides stabilise this stretch: C28–C172 and C50–C106. N185, N197, N206, N234, and N255 each carry an N-linked (GlcNAc...) asparagine glycan. The span at 233–245 (LNQTSRSLNQTPG) shows a compositional bias: polar residues. Disordered regions lie at residues 233–259 (LNQTSRSLNQTPGHLSRTHGPLNGTHG) and 292–352 (YSPS…SQEE). The span at 311-327 (PTSPTPQNPLQPPPPDP) shows a compositional bias: pro residues. N-linked (GlcNAc...) asparagine glycans are attached at residues N332 and N347.

It belongs to the EPO/TPO family.

The protein resides in the secreted. In terms of biological role, lineage-specific cytokine affecting the proliferation and maturation of megakaryocytes from their committed progenitor cells. It acts at a late stage of megakaryocyte development. It may be the major physiological regulator of circulating platelets. The protein is Thrombopoietin (THPO) of Canis lupus familiaris (Dog).